The primary structure comprises 1188 residues: DNA-directed RNA polymerase II subunit 2 (1188 aa).

Aspartate 800 provides a ligand contact to Mg(2+). Disordered regions lie at residues 852-871 and 877-897; these read SYDK…VSGE and KTTP…TRRD. The segment covering 879–892 has biased composition (polar residues); the sequence is TPISQDEAQGQSSR. Zn(2+) is bound by residues cysteine 1124, cysteine 1127, cysteine 1142, and cysteine 1145. The segment at 1124–1145 adopts a C4-type zinc-finger fold; it reads CEVCGLIAIANLKKNSFECRGC.

Belongs to the RNA polymerase beta chain family. In terms of assembly, component of the RNA polymerase II complex consisting of at least 12 subunits.

The protein localises to the nucleus. It carries out the reaction RNA(n) + a ribonucleoside 5'-triphosphate = RNA(n+1) + diphosphate. Its function is as follows. DNA-dependent RNA polymerase catalyzes the transcription of DNA into RNA using the four ribonucleoside triphosphates as substrates. Second largest component of RNA polymerase II which synthesizes mRNA precursors and many functional non-coding RNAs. Proposed to contribute to the polymerase catalytic activity and forms the polymerase active center together with the largest subunit. Pol II is the central component of the basal RNA polymerase II transcription machinery. It is composed of mobile elements that move relative to each other. NRPB2 is part of the core element with the central large cleft, the clamp element that moves to open and close the cleft and the jaws that are thought to grab the incoming DNA template. Functionally, essential for the completion of the three rounds of mitosis in female megaspores required for the development of mature gametophytes. This chain is DNA-directed RNA polymerase II subunit 2 (NRPB2), found in Arabidopsis thaliana (Mouse-ear cress).